The sequence spans 623 residues: MSSSKKIVILYGSETGNAHDFATILSHRLHRWHFSHTFCSIGDYDPQDILKCRYLFIICSTTGQGELPRNVNALKGERPVTFWSFLKRKNLPSNLLNHIQTAMLGLGDSSYPKFNYGIRKLHQRIVTQLGANELFDRLEADDQAMAGSNKGTGLGIESVYFEYEKKVLSFLLSKYPNRKVNGQIIKREELDPEVYLEPASYLQLSDEHANEKFTSTKVIFEGDESLKVGRVNINKRITSEGHFQDVRQFKFSNVDKIQENYEPGDTVTIYPCNTDEDVSRFLANQSHWLEIADKPLNFTSGVPNDLKDGGLVRPMTLRNLLKYHCDFMSIPRTSFFLKIWTFATDVTKMERGQEQLNDQREKLRQFATDQDMQDLYDYCNRPRRSILEVLEDFISVKLPWKYVLDYLPIIKPRYYSISSGPGDPNIELTVAIVKYKTILRKIRRGICTNYIARLQEGEQIRYKLQNNHIIKKEFLNKPMILVGPGVGLAPLLSVVKAEISKDIKLLFGCRYKDKDYIYKDMLEDWFRKGKIALHSSFSRDEENSPGVKYVQDYLWRLGEEITNLVVNKDAVFFLCGSSGKMPIQVRLTFIEMLKKWGNFSDEETAKKYLKEMEKSDRYIQETW.

A Flavodoxin-like domain is found at 7 to 168; that stretch reads IVILYGSETG…VYFEYEKKVL (162 aa). FMN-binding positions include 13–18, 60–63, 106–115, and Asp142; these read SETGNA, STTG, and LGDSSYPKFN. Positions 224–491 constitute an FAD-binding FR-type domain; it reads ESLKVGRVNI…VGPGVGLAPL (268 aa). Residues Arg383, 413 to 416, and 445 to 448 each bind FAD; these read RYYS and GICT. 538–539 provides a ligand contact to NADP(+); it reads SR. Residue Trp623 coordinates FAD.

The protein belongs to the NADPH-dependent diflavin oxidoreductase NDOR1 family. This sequence in the N-terminal section; belongs to the flavodoxin family. In the C-terminal section; belongs to the flavoprotein pyridine nucleotide cytochrome reductase family. Interacts with DRE2; as part of the cytosolic iron-sulfur (Fe-S) protein assembly (CIA) machinery. FAD serves as cofactor. FMN is required as a cofactor.

The protein resides in the cytoplasm. It localises to the mitochondrion. It carries out the reaction 2 oxidized [2Fe-2S]-[protein] + NADPH = 2 reduced [2Fe-2S]-[protein] + NADP(+) + H(+). NADPH-dependent reductase which is a central component of the cytosolic iron-sulfur (Fe-S) protein assembly (CIA) machinery. Transfers electrons from NADPH via its FAD and FMN prosthetic groups to the [2Fe-2S] cluster of DRE2, another key component of the CIA machinery. In turn, this reduced cluster provides electrons for assembly of cytosolic iron-sulfur cluster proteins. Positively controls H(2)O(2)-induced cell death. The chain is NADPH-dependent diflavin oxidoreductase 1 from Saccharomyces cerevisiae (strain ATCC 204508 / S288c) (Baker's yeast).